The chain runs to 297 residues: Protease HtpX homolog (297 aa).

2 helical membrane-spanning segments follow: residues 14-34 (VILL…AGYL) and 39-59 (YQLG…SMIF). Histidine 143 is a Zn(2+) binding site. Glutamate 144 is an active-site residue. A Zn(2+)-binding site is contributed by histidine 147. Transmembrane regions (helical) follow at residues 158–178 (IAVA…RMMW) and 193–213 (GFGA…PLAA). Glutamate 225 lines the Zn(2+) pocket.

Belongs to the peptidase M48B family. Zn(2+) serves as cofactor.

The protein resides in the cell membrane. The sequence is that of Protease HtpX homolog from Streptococcus equi subsp. equi (strain 4047).